A 198-amino-acid chain; its full sequence is Ribonuclease HII (198 aa).

The region spanning 5–195 is the RNase H type-2 domain; that stretch reads LRVAGVDEAG…VKAWLASHQG (191 aa). A divalent metal cation is bound by residues aspartate 11, glutamate 12, and aspartate 103.

This sequence belongs to the RNase HII family. The cofactor is Mn(2+). It depends on Mg(2+) as a cofactor.

It is found in the cytoplasm. The enzyme catalyses Endonucleolytic cleavage to 5'-phosphomonoester.. Functionally, endonuclease that specifically degrades the RNA of RNA-DNA hybrids. This is Ribonuclease HII from Chromobacterium violaceum (strain ATCC 12472 / DSM 30191 / JCM 1249 / CCUG 213 / NBRC 12614 / NCIMB 9131 / NCTC 9757 / MK).